The following is a 456-amino-acid chain: RUN domain-containing protein 3B (456 aa).

Residues 1–24 are disordered; it reads MASRSLGGLSGIRGGGGGGGKKSL. Residues 8 to 21 are compositionally biased toward gly residues; sequence GLSGIRGGGGGGGK. R13 carries the post-translational modification Omega-N-methylarginine. The region spanning 57 to 189 is the RUN domain; it reads DDSSPEFNNF…IDFSFCLKGE (133 aa). Residues S215 and S216 each carry the phosphoserine modification. Residues 216–237 are disordered; that stretch reads SDEEELRTLGSSGSESSTPENV. Positions 224 to 235 are enriched in polar residues; the sequence is LGSSGSESSTPE. Positions 300 to 325 form a coiled coil; that stretch reads AHKLEKEQLEYIIVELQDQLTVLKNN. A compositionally biased stretch (polar residues) spans 382-405; that stretch reads SLSQTSLDPGQSQEGDGKQDTLNV. The tract at residues 382 to 411 is disordered; that stretch reads SLSQTSLDPGQSQEGDGKQDTLNVMSEGKE.

This sequence belongs to the RUNDC3 family. As to quaternary structure, interacts with RAP2A.

This is RUN domain-containing protein 3B (RUNDC3B) from Pongo abelii (Sumatran orangutan).